A 373-amino-acid chain; its full sequence is MTRMQQRTLMVMAGGTGGHVFPGLAVAHLMQAWGWRVVWLGNPNGMEATLVPKHGIPMEYVQFGGLRGKGMKTKLMLPVNLLRACMQSLSVLRRVKPDVVLGMGGYITFPAGMMTALSGTPLVLHEQNSIAGLANKVLAKLAKRVLVAFPKALPHAEWTGNPIREELARTTAPRQRYAARSGPLNVLVVGGSLGASALNEVVPRALAKLAPHERPRIVHQAGAKHIDALRANYEAAGIAAGDGAQLVPFIDDMTSAYANADLVICRSGAMTVAEIAAVGVAAFFVPFPYAVDDHQTTNAAFLADNGAALLVQQRDLSADALADWLRSQTRASLAEMAERSRSLAKPDATEQVAQICATVAGVTPSLSPEGKQQ.

UDP-N-acetyl-alpha-D-glucosamine is bound by residues 16–18 (TGG), N128, R164, S192, I250, and Q295.

Belongs to the glycosyltransferase 28 family. MurG subfamily.

The protein localises to the cell inner membrane. It carries out the reaction di-trans,octa-cis-undecaprenyl diphospho-N-acetyl-alpha-D-muramoyl-L-alanyl-D-glutamyl-meso-2,6-diaminopimeloyl-D-alanyl-D-alanine + UDP-N-acetyl-alpha-D-glucosamine = di-trans,octa-cis-undecaprenyl diphospho-[N-acetyl-alpha-D-glucosaminyl-(1-&gt;4)]-N-acetyl-alpha-D-muramoyl-L-alanyl-D-glutamyl-meso-2,6-diaminopimeloyl-D-alanyl-D-alanine + UDP + H(+). The protein operates within cell wall biogenesis; peptidoglycan biosynthesis. Its function is as follows. Cell wall formation. Catalyzes the transfer of a GlcNAc subunit on undecaprenyl-pyrophosphoryl-MurNAc-pentapeptide (lipid intermediate I) to form undecaprenyl-pyrophosphoryl-MurNAc-(pentapeptide)GlcNAc (lipid intermediate II). The sequence is that of UDP-N-acetylglucosamine--N-acetylmuramyl-(pentapeptide) pyrophosphoryl-undecaprenol N-acetylglucosamine transferase from Paraburkholderia phymatum (strain DSM 17167 / CIP 108236 / LMG 21445 / STM815) (Burkholderia phymatum).